We begin with the raw amino-acid sequence, 931 residues long: Beta-mannosidase A (931 aa).

A signal peptide spans 1 to 21 (MRHSIGLAAALLAPTLPVALG). Residues Asn-40, Asn-79, Asn-247, Asn-282, Asn-316, Asn-326, and Asn-347 are each glycosylated (N-linked (GlcNAc...) asparagine). Glu-479 acts as the Proton donor in catalysis. 8 N-linked (GlcNAc...) asparagine glycosylation sites follow: Asn-550, Asn-608, Asn-658, Asn-738, Asn-790, Asn-798, Asn-830, and Asn-918.

This sequence belongs to the glycosyl hydrolase 2 family. Beta-mannosidase A subfamily. In terms of assembly, homodimer.

The protein localises to the secreted. It catalyses the reaction Hydrolysis of terminal, non-reducing beta-D-mannose residues in beta-D-mannosides.. It functions in the pathway glycan metabolism; N-glycan degradation. Exoglycosidase that cleaves the single beta-linked mannose residue from the non-reducing end of beta-mannosidic oligosaccharides of various complexity and length. Involved in the degradation of polymeric mannan and galactomannan. In Aspergillus niger (strain ATCC MYA-4892 / CBS 513.88 / FGSC A1513), this protein is Beta-mannosidase A (mndA).